The sequence spans 141 residues: Hemoglobin subunit alpha-A (141 aa).

One can recognise a Globin domain in the interval valine 1–arginine 141. Residue histidine 58 coordinates O2. Histidine 87 serves as a coordination point for heme b.

This sequence belongs to the globin family. In terms of assembly, heterotetramer of two alpha chains and two beta chains. As to expression, red blood cells.

Involved in oxygen transport from the lung to the various peripheral tissues. The sequence is that of Hemoglobin subunit alpha-A (HBAA) from Trigonoceps occipitalis (White-headed vulture).